The sequence spans 241 residues: tRNA (guanine-N(7)-)-methyltransferase (241 aa).

The S-adenosyl-L-methionine site is built by Glu-76, Glu-101, Asp-128, and Asp-150. The active site involves Asp-150. Substrate contacts are provided by residues Lys-154, Asp-186, and 219–222 (TRYE).

It belongs to the class I-like SAM-binding methyltransferase superfamily. TrmB family.

The enzyme catalyses guanosine(46) in tRNA + S-adenosyl-L-methionine = N(7)-methylguanosine(46) in tRNA + S-adenosyl-L-homocysteine. It participates in tRNA modification; N(7)-methylguanine-tRNA biosynthesis. In terms of biological role, catalyzes the formation of N(7)-methylguanine at position 46 (m7G46) in tRNA. In Cereibacter sphaeroides (strain ATCC 17023 / DSM 158 / JCM 6121 / CCUG 31486 / LMG 2827 / NBRC 12203 / NCIMB 8253 / ATH 2.4.1.) (Rhodobacter sphaeroides), this protein is tRNA (guanine-N(7)-)-methyltransferase.